Consider the following 150-residue polypeptide: Transcriptional repressor NrdR (150 aa).

The segment at 3–34 is a zinc-finger region; sequence CPFCGYEETKVLDSRPVSNGTSIRRRRECLQC. Residues 49 to 139 form the ATP-cone domain; it reads IRIIKKDGRR…VYKEFRDLDS (91 aa).

This sequence belongs to the NrdR family. Requires Zn(2+) as cofactor.

In terms of biological role, negatively regulates transcription of bacterial ribonucleotide reductase nrd genes and operons by binding to NrdR-boxes. This is Transcriptional repressor NrdR from Petrotoga mobilis (strain DSM 10674 / SJ95).